A 398-amino-acid polypeptide reads, in one-letter code: Cobalamin import ATP-binding protein BtuD (398 aa).

Residues 3 to 237 (LDVTGLDVEL…DTIRAAFDAR (235 aa)) enclose the ABC transporter domain. 35–42 (GPNGAGKS) contacts ATP.

The protein belongs to the ABC transporter superfamily. As to quaternary structure, the complex is composed of two ATP-binding proteins (BtuD), two transmembrane proteins (BtuC) and a solute-binding protein (BtuF).

The protein resides in the cell membrane. It carries out the reaction an R-cob(III)alamin(out) + ATP + H2O = an R-cob(III)alamin(in) + ADP + phosphate + H(+). Its function is as follows. Required for corrinoid utilization. Probably part of the ABC transporter complex BtuCDF involved in cobalamin (vitamin B12) import. Probably responsible for energy coupling to the transport system. The protein is Cobalamin import ATP-binding protein BtuD (btuD) of Halobacterium salinarum (strain ATCC 29341 / DSM 671 / R1).